We begin with the raw amino-acid sequence, 531 residues long: Putative F-box protein At2g02890 (531 aa).

An F-box domain is found at 141–188 (RHSSSLTNDLIEEILSRLHSKSVARFRCVSKQCASMFASPYFKKLFQT).

The sequence is that of Putative F-box protein At2g02890 from Arabidopsis thaliana (Mouse-ear cress).